The chain runs to 623 residues: Set1/Ash2 histone methyltransferase complex subunit ASH2 (623 aa).

Positions 1–18 are enriched in gly residues; that stretch reads MAAAGAGPGPGVSAGPGP. The PHD-type; atypical zinc finger occupies 1–62; that stretch reads MAAAGAGPGP…SGEAESGDAN (62 aa). The disordered stretch occupies residues 1–99; it reads MAAAGAGPGP…MDTQAGSVDE (99 aa). Residues 36–56 are compositionally biased toward low complexity; that stretch reads AAGAGEGPSAAPGAEPSSGEA. The interval 63-172 is DNA-binding; that stretch reads LVDVSGLETE…MCLSALANLT (110 aa). The span at 84–95 shows a compositional bias: polar residues; that stretch reads GDTSEVMDTQAG. Phosphoserine is present on S96. The C4-type zinc finger occupies 112–145; the sequence is CGICTKWFTADTFGIDTSSCLPFMTNYSFHCNVC. A compositionally biased stretch (basic and acidic residues) spans 230–247; it reads LVKEHPDPGSKDPEEDYP. The tract at residues 230-326 is disordered; the sequence is LVKEHPDPGS…AQRLPPHGYP (97 aa). A compositionally biased stretch (polar residues) spans 265 to 277; that stretch reads NQKQSSAVSASGN. Over residues 278–290 the composition is skewed to gly residues; it reads LNGGIAAGSSGKG. At R291 the chain carries Asymmetric dimethylarginine; by PRMT1 and PRMT5. Position 311 is a phosphoserine (S311). The tract at residues 311 to 623 is interaction with RBBP5; sequence SDPLFSAQRL…DGRRSPPWEP (313 aa). One can recognise a B30.2/SPRY domain in the interval 355 to 578; the sequence is LDCWAGKPIP…VSINFGPSFK (224 aa).

In terms of assembly, interacts with HCFC1. Core component of several methyltransferase-containing complexes including MLL1/MLL, MLL2/3 (also named ASCOM complex) and MLL4/WBP7. Each complex is at least composed of ASH2L, RBBP5, WDR5, DPY30, one or more specific histone methyltransferases (KMT2A/MLL1, KMT2D/MLL2, KMT2C/MLL3 and KMT2B/MLL4), and the facultative components PAGR1, BACC1, CHD8, E2F6, HCFC1, HCFC2, HSP70, INO80C, KDM6A, KANSL1, LAS1L, MAX, MCRS1, MEN1, MGA, KAT8/MOF, NCOA6, PAXIP1/PTIP, PELP1, PHF20, PRP31, RING2, RUVB1/TIP49A, RUVB2/TIP49B, SENP3, TAF1, TAF4, TAF6, TAF7, TAF9, TEX10 and alpha- and beta-tubulin. Component of the SET1 complex, at least composed of the catalytic subunit (SETD1A or SETD1B), WDR5, WDR82, RBBP5, ASH2L/ASH2, CXXC1/CFP1, HCFC1 and DPY30. Found in a complex with RBBP5, ASH2L, DPY30, KMT2A, KMT2D and WDR5. Component of a histone methylation complex composed of at least ZNF335, RBBP5, ASH2L and WDR5; the complex may have histone H3-specific methyltransferase activity, however does not have specificity for 'Lys-4' of histone H3. Within the complex, interacts with ZNF335. Interacts with RBBP5. Components of this complex may associate with components of a nuclear receptor-mediated transcription complex to form a complex at least composed of ZNF335, HCFC1, CCAR2, EMSY, MKI67, RBBP5, ASH2L and WDR5. Within this complex also interacts with CCAR2 and EMSY. Interacts with DPY30. Interacts with SETD1A and SETD1B. In terms of processing, both monomethylated and dimethylated on arginine residues in the C-terminus. Arg-291 is the major site. Methylation is not required for nuclear localization, nor for MLL complex integrity or maintenance of global histone H3K4me3 levels. Ubiquitously expressed, with abundant expression in the heart, skeletal muscle and kidney. Low expression is seen in spleen, lung and testis.

The protein localises to the nucleus. In terms of biological role, transcriptional regulator. Component or associated component of some histone methyltransferase complexes which regulates transcription through recruitment of those complexes to gene promoters. Component of the Set1/Ash2 histone methyltransferase (HMT) complex, a complex that specifically methylates 'Lys-4' of histone H3, but not if the neighboring 'Lys-9' residue is already methylated. As part of the MLL1/MLL complex it is involved in methylation and dimethylation at 'Lys-4' of histone H3. May play a role in hematopoiesis. In association with RBBP5 and WDR5, stimulates the histone methyltransferase activities of KMT2A, KMT2B, KMT2C, KMT2D, SETD1A and SETD1B. This is Set1/Ash2 histone methyltransferase complex subunit ASH2 (Ash2l) from Mus musculus (Mouse).